A 254-amino-acid polypeptide reads, in one-letter code: tRNA (guanine-N(1)-)-methyltransferase (254 aa).

S-adenosyl-L-methionine-binding positions include Gly115 and 135-140 (VGDFVL).

Belongs to the RNA methyltransferase TrmD family. In terms of assembly, homodimer.

The protein resides in the cytoplasm. It carries out the reaction guanosine(37) in tRNA + S-adenosyl-L-methionine = N(1)-methylguanosine(37) in tRNA + S-adenosyl-L-homocysteine + H(+). Its function is as follows. Specifically methylates guanosine-37 in various tRNAs. The chain is tRNA (guanine-N(1)-)-methyltransferase from Francisella tularensis subsp. tularensis (strain FSC 198).